Here is a 118-residue protein sequence, read N- to C-terminus: Large ribosomal subunit protein bL12 (118 aa).

M1 carries the N-acetylmethionine; in form MA2 modification.

Belongs to the bacterial ribosomal protein bL12 family. As to quaternary structure, homodimer. Part of the ribosomal stalk of the 50S ribosomal subunit. Forms a multimeric L10(L12)X complex, where L10 forms an elongated spine to which 2 to 4 L12 dimers bind in a sequential fashion. Binds GTP-bound translation factors. Acetylation of Met-1 converts MA1 to MA2.

Functionally, forms part of the ribosomal stalk which helps the ribosome interact with GTP-bound translation factors. Is thus essential for accurate translation. This is Large ribosomal subunit protein bL12 from Micrococcus luteus (Micrococcus lysodeikticus).